The following is a 244-amino-acid chain: Type III pantothenate kinase (244 aa).

8–15 (DQGNSACK) is a binding site for ATP. A substrate-binding site is contributed by 94–97 (GADR). Residue Asp96 is the Proton acceptor of the active site. Asp117 provides a ligand contact to K(+). Thr120 lines the ATP pocket. Thr175 is a substrate binding site.

Belongs to the type III pantothenate kinase family. In terms of assembly, homodimer. NH4(+) serves as cofactor. It depends on K(+) as a cofactor.

It localises to the cytoplasm. It catalyses the reaction (R)-pantothenate + ATP = (R)-4'-phosphopantothenate + ADP + H(+). Its pathway is cofactor biosynthesis; coenzyme A biosynthesis; CoA from (R)-pantothenate: step 1/5. Its function is as follows. Catalyzes the phosphorylation of pantothenate (Pan), the first step in CoA biosynthesis. This chain is Type III pantothenate kinase, found in Porphyromonas gingivalis (strain ATCC 33277 / DSM 20709 / CIP 103683 / JCM 12257 / NCTC 11834 / 2561).